Reading from the N-terminus, the 249-residue chain is Photosystem I-associated linker protein CpcL (249 aa).

Residues 11-189 (VSQNQRVTNY…PRYGADHREK (179 aa)) form the PBS-linker domain. A helical transmembrane segment spans residues 223–247 (VVLYVGGALVSLGIIAVALSAWGII).

It belongs to the phycobilisome linker protein family. In terms of assembly, part of a specialized phycobilisome (PBS), a structure that is usually composed of two distinct substructures: a core complex and a number of rods radiating from the core. This protein is part of a core-less PBS rod (called CpcL-PBS) with on average 5 stacked phycocyanin hexamers (PC, CpcA and CpcB). Linker CpcL connects the PC stack to the thylakoid, the hexamers are linked by 1 copy of CpcC1, 3 copies of CpcC2 and the stack is terminated by a single copy of CpcD. Ferredoxin--NADP reductase (petH) is also part of the complex. CpcL-PBS has no central core proteins (allophycocyanin ApcA, ApcB) nor phycobiliprotein ApcE.

The protein localises to the cellular thylakoid membrane. In terms of biological role, rod linker protein, associated with phycocyanin. Linker polypeptides determine the state of aggregation and the location of the disk-shaped phycobiliprotein units within the phycobilisome and modulate their spectroscopic properties in order to mediate a directed and optimal energy transfer. Plays a role in energy transfer from the phycobilisome to photosystem I (PSI). Although able to transfer energy to both photosystems, this is predominantly a PSI antenna. The polypeptide is Photosystem I-associated linker protein CpcL (Synechocystis sp. (strain ATCC 27184 / PCC 6803 / Kazusa)).